A 289-amino-acid polypeptide reads, in one-letter code: ATP synthase subunit a (289 aa).

6 helical membrane passes run 43-63 (AFHL…VLIF), 104-124 (IAPL…VDLI), 160-180 (LSVF…GGFI), 193-213 (IFVQ…TLIA), 232-252 (VFIL…GLGV), and 259-279 (AVFH…LTIV).

The protein belongs to the ATPase A chain family. In terms of assembly, F-type ATPases have 2 components, CF(1) - the catalytic core - and CF(0) - the membrane proton channel. CF(1) has five subunits: alpha(3), beta(3), gamma(1), delta(1), epsilon(1). CF(0) has three main subunits: a(1), b(2) and c(9-12). The alpha and beta chains form an alternating ring which encloses part of the gamma chain. CF(1) is attached to CF(0) by a central stalk formed by the gamma and epsilon chains, while a peripheral stalk is formed by the delta and b chains.

It is found in the cell inner membrane. Its function is as follows. Key component of the proton channel; it plays a direct role in the translocation of protons across the membrane. This Pseudomonas fluorescens (strain SBW25) protein is ATP synthase subunit a.